Here is a 390-residue protein sequence, read N- to C-terminus: 5-hydroxytryptamine receptor 1B (390 aa).

Over 1–46 (MEEPGAQCAPPLAAGSQIAVPQANLSAAHSHNCSAEGYIYQDSIAL) the chain is Extracellular. Residues Asn-24 and Asn-32 are each glycosylated (N-linked (GlcNAc...) asparagine). The helical transmembrane segment at 47–72 (PWKVLLVLLLALFTLATTLSNAFVVA) threads the bilayer. Residues 73 to 86 (TVYRTRKLHTPANY) are Cytoplasmic-facing. The chain crosses the membrane as a helical span at residues 87–111 (LIASLAVTDLLVSILVMPISTMYTV). At 112 to 119 (TGRWTLGQ) the chain is on the extracellular side. A helical transmembrane segment spans residues 120–145 (VVCDLWLSSDITCCTASIMHLCVIAL). An intrachain disulfide couples Cys-122 to Cys-199. The ergotamine site is built by Asp-129 and Thr-134. A DRY motif; important for ligand-induced conformation changes and signaling motif is present at residues 146 to 148 (DRY). The Cytoplasmic segment spans residues 146–165 (DRYWAITDAVEYSAKRTPKR). The chain crosses the membrane as a helical span at residues 166-184 (AAIMIRLVWVFSICISLPP). Residues 185–205 (FFWRQAKAEEEVSECLVNTDH) are Extracellular-facing. Val-201 serves as a coordination point for ergotamine. Residues 206 to 229 (VLYTVYSTVGAFYLPTLLLIALYG) traverse the membrane as a helical segment. Residues 230 to 315 (RIYVEARSRI…AARERKATKT (86 aa)) lie on the Cytoplasmic side of the membrane. Over residues 260–272 (SPGSTTSVTSINS) the composition is skewed to polar residues. Residues 260–282 (SPGSTTSVTSINSRAPDVPSESG) form a disordered region. Residues 316-337 (LGIILGVFIVCWLPFFIISLVM) traverse the membrane as a helical segment. Residues 338 to 347 (PICKDACWFH) are Extracellular-facing. Residues 348 to 370 (QAIFDFFTWLGYVNSLINPIIYT) form a helical membrane-spanning segment. An NPxxY motif; important for ligand-induced conformation changes and signaling motif is present at residues 365-369 (NPIIY). Residues 371–390 (MSNEDFKQAFHKLIRFKCTS) are Cytoplasmic-facing. Cys-388 is lipidated: S-palmitoyl cysteine.

The protein belongs to the G-protein coupled receptor 1 family. Homodimer. Heterodimer with HTR1D. Phosphorylated. Desensitization of the receptor may be mediated by its phosphorylation. In terms of processing, palmitoylated.

It is found in the cell membrane. Functionally, G-protein coupled receptor for 5-hydroxytryptamine (serotonin). Also functions as a receptor for ergot alkaloid derivatives, various anxiolytic and antidepressant drugs and other psychoactive substances, such as lysergic acid diethylamide (LSD). Ligand binding causes a conformation change that triggers signaling via guanine nucleotide-binding proteins (G proteins) and modulates the activity of downstream effectors, such as adenylate cyclase. HTR1B is coupled to G(i)/G(o) G alpha proteins and mediates inhibitory neurotransmission by inhibiting adenylate cyclase activity. Arrestin family members inhibit signaling via G proteins and mediate activation of alternative signaling pathways. Regulates the release of 5-hydroxytryptamine, dopamine and acetylcholine in the brain, and thereby affects neural activity, nociceptive processing, pain perception, mood and behavior. Besides, plays a role in vasoconstriction of cerebral arteries. This Oryctolagus cuniculus (Rabbit) protein is 5-hydroxytryptamine receptor 1B (HTR1B).